The sequence spans 171 residues: Large ribosomal subunit protein bL9 (171 aa).

This sequence belongs to the bacterial ribosomal protein bL9 family.

In terms of biological role, binds to the 23S rRNA. The sequence is that of Large ribosomal subunit protein bL9 from Rickettsia rickettsii (strain Iowa).